Reading from the N-terminus, the 299-residue chain is 33 kDa chaperonin (299 aa).

2 disulfide bridges follow: Cys240/Cys242 and Cys273/Cys276.

This sequence belongs to the HSP33 family. Under oxidizing conditions two disulfide bonds are formed involving the reactive cysteines. Under reducing conditions zinc is bound to the reactive cysteines and the protein is inactive.

The protein resides in the cytoplasm. Its function is as follows. Redox regulated molecular chaperone. Protects both thermally unfolding and oxidatively damaged proteins from irreversible aggregation. Plays an important role in the bacterial defense system toward oxidative stress. This is 33 kDa chaperonin from Gloeothece citriformis (strain PCC 7424) (Cyanothece sp. (strain PCC 7424)).